The primary structure comprises 950 residues: Leucine--tRNA ligase (950 aa).

Positions 66-77 match the 'HIGH' region motif; it reads PYPSGAGLHVGH. The 'KMSKS' region motif lies at 721-725; sequence KIGKS. ATP is bound at residue lysine 724.

It belongs to the class-I aminoacyl-tRNA synthetase family.

It localises to the cytoplasm. The catalysed reaction is tRNA(Leu) + L-leucine + ATP = L-leucyl-tRNA(Leu) + AMP + diphosphate. This Nocardia farcinica (strain IFM 10152) protein is Leucine--tRNA ligase.